A 256-amino-acid chain; its full sequence is Floral homeotic protein APETALA 1-1 (256 aa).

The MADS-box domain occupies 1–61 (MGRGRVQLKR…GKLFEYSTDS (61 aa)). In terms of domain architecture, K-box spans 88–178 (NTNWSMEYNR…SKQIKEREKV (91 aa)).

In terms of assembly, homodimer capable of binding to CArG-box sequences. As to expression, expressed in some of the meristems of arrest-stage broccoli heads.

The protein resides in the nucleus. Functionally, transcription factor that promotes early floral meristem identity in synergy with LEAFY. Displays a redundant function with CAULIFLOWER in the up-regulation of LEAFY. Required subsequently for the transition of an inflorescence meristem into a floral meristem, and for the normal development of sepals and petals in flowers. Regulates positively B class homeotic proteins. The sequence is that of Floral homeotic protein APETALA 1-1 (1AP1) from Brassica oleracea var. italica (Broccoli).